The sequence spans 330 residues: Tryptophan--tRNA ligase (330 aa).

ATP is bound by residues 10 to 12 and 18 to 19; these read QPS and GN. The short motif at 11 to 19 is the 'HIGH' region element; it reads PSGSVTLGN. Residue aspartate 133 coordinates L-tryptophan. ATP is bound by residues 145–147, isoleucine 184, and 193–197; these read GED and KMSKS. Positions 193–197 match the 'KMSKS' region motif; it reads KMSKS.

Belongs to the class-I aminoacyl-tRNA synthetase family. In terms of assembly, homodimer.

It is found in the cytoplasm. It catalyses the reaction tRNA(Trp) + L-tryptophan + ATP = L-tryptophyl-tRNA(Trp) + AMP + diphosphate + H(+). In terms of biological role, catalyzes the attachment of tryptophan to tRNA(Trp). In Bacillus subtilis (strain 168), this protein is Tryptophan--tRNA ligase.